We begin with the raw amino-acid sequence, 778 residues long: Endonuclease MutS2 (778 aa).

328-335 (GPNTGGKT) provides a ligand contact to ATP. A Smr domain is found at 702 to 777 (LDLRGKRYEE…GSGATIVTFK (76 aa)).

Belongs to the DNA mismatch repair MutS family. MutS2 subfamily. As to quaternary structure, homodimer. Binds to stalled ribosomes, contacting rRNA.

Its function is as follows. Endonuclease that is involved in the suppression of homologous recombination and thus may have a key role in the control of bacterial genetic diversity. Functionally, acts as a ribosome collision sensor, splitting the ribosome into its 2 subunits. Detects stalled/collided 70S ribosomes which it binds and splits by an ATP-hydrolysis driven conformational change. Acts upstream of the ribosome quality control system (RQC), a ribosome-associated complex that mediates the extraction of incompletely synthesized nascent chains from stalled ribosomes and their subsequent degradation. Probably generates substrates for RQC. The protein is Endonuclease MutS2 of Streptococcus pneumoniae (strain CGSP14).